The chain runs to 133 residues: Surface presentation of antigens protein SpaK (133 aa).

The protein belongs to the SpaK family. In terms of assembly, homodimer.

Its function is as follows. Required for surface presentation of invasion plasmid antigens. Chaperone specialized in the storage of effectors within the bacterial cytoplasm, maintaining them in a secretion-competent state, and allowing their immediate delivery to target cells upon contact of the bacterium with the host cells. Has been shown to chaperone IpaA, IpgB1, OspC3 and probably also OspB. This chain is Surface presentation of antigens protein SpaK (spaK), found in Shigella flexneri.